A 409-amino-acid polypeptide reads, in one-letter code: MSHPEAPITPEVEADLAIARRGCDELLVESEFARKLACSRATGVPLRIKLGLDPTAPDIHLGHTVVLNKMRQLQDLGHNVIFLIGDFTSTIGDPSGRNSTRPPLTREQIETNAKTYYAQASLVLDPARTEIRYNSEWCDPLGARGMIQLASRYTVARMMEREDFTRRFKGGVPIAVHEFLYPLLQGYDSVALKADLELGGTDQKFNLLVGRELQKEYGQEQQCILTMPLLVGTDGVEKMSKSKGNYIGISEAPESMFGKLMSISDTLMWRYYELLSFRSLADIAALKAEIDGGRNPRDAKVALAQEIVARFHSPQAAEAALAAFEARFRDGAIPEDMPEVTVGGAPQGILRILREAGLVASGSEAQRNVEQGGVRVNGDRVEDKSLQLSAGTYVVQVGKRKFARVKLVG.

The 'HIGH' region signature appears at 54–63 (PTAPDIHLGH). Residues 238-242 (KMSKS) carry the 'KMSKS' region motif. Lysine 241 contacts ATP. An S4 RNA-binding domain is found at 347-407 (QGILRILREA…GKRKFARVKL (61 aa)).

It belongs to the class-I aminoacyl-tRNA synthetase family. TyrS type 2 subfamily. In terms of assembly, homodimer.

It localises to the cytoplasm. The enzyme catalyses tRNA(Tyr) + L-tyrosine + ATP = L-tyrosyl-tRNA(Tyr) + AMP + diphosphate + H(+). Its function is as follows. Catalyzes the attachment of tyrosine to tRNA(Tyr) in a two-step reaction: tyrosine is first activated by ATP to form Tyr-AMP and then transferred to the acceptor end of tRNA(Tyr). The sequence is that of Tyrosine--tRNA ligase from Bordetella bronchiseptica (strain ATCC BAA-588 / NCTC 13252 / RB50) (Alcaligenes bronchisepticus).